A 246-amino-acid polypeptide reads, in one-letter code: MKIIEAKHFDDMSLKAAQFMIEKIQRDPTITLGLATGGTPQKMYELLINDHRTNGTSYHQVTTFNLDEYIGLDRHDPNSYYTYMHKALFDHIDIRDEQAFLPNGTASNFNAECERYEALIQQRGGIDLQVLGIGANGHIGFNEPGTSFESSTHIVKLTDSTREANARYFNDLSEVPTEAITMGIQSIMNAKEILLLASGKKKADALYQLIHGKVDESFPASVLQRHEQVTIIADREALQKVAVSSN.

Catalysis depends on aspartate 67, which acts as the Proton acceptor; for enolization step. The active-site For ring-opening step is the asparagine 136. Residue histidine 138 is the Proton acceptor; for ring-opening step of the active site. The active-site For ring-opening step is the glutamate 143.

Belongs to the glucosamine/galactosamine-6-phosphate isomerase family. NagB subfamily.

The enzyme catalyses alpha-D-glucosamine 6-phosphate + H2O = beta-D-fructose 6-phosphate + NH4(+). It participates in amino-sugar metabolism; N-acetylneuraminate degradation; D-fructose 6-phosphate from N-acetylneuraminate: step 5/5. In terms of biological role, catalyzes the reversible isomerization-deamination of glucosamine 6-phosphate (GlcN6P) to form fructose 6-phosphate (Fru6P) and ammonium ion. The chain is Glucosamine-6-phosphate deaminase from Halalkalibacterium halodurans (strain ATCC BAA-125 / DSM 18197 / FERM 7344 / JCM 9153 / C-125) (Bacillus halodurans).